The sequence spans 192 residues: Xanthine phosphoribosyltransferase (192 aa).

Residues leucine 20 and asparagine 27 each contribute to the xanthine site. 128-132 (ANGQA) contacts 5-phospho-alpha-D-ribose 1-diphosphate. A xanthine-binding site is contributed by lysine 156.

This sequence belongs to the purine/pyrimidine phosphoribosyltransferase family. Xpt subfamily. In terms of assembly, homodimer.

Its subcellular location is the cytoplasm. The enzyme catalyses XMP + diphosphate = xanthine + 5-phospho-alpha-D-ribose 1-diphosphate. It functions in the pathway purine metabolism; XMP biosynthesis via salvage pathway; XMP from xanthine: step 1/1. Functionally, converts the preformed base xanthine, a product of nucleic acid breakdown, to xanthosine 5'-monophosphate (XMP), so it can be reused for RNA or DNA synthesis. This Lacticaseibacillus casei (strain BL23) (Lactobacillus casei) protein is Xanthine phosphoribosyltransferase.